The following is an 898-amino-acid chain: Interleukin enhancer-binding factor 3-B (898 aa).

The DZF domain maps to arginine 5–glycine 379. 5 disordered regions span residues glutamine 52–arginine 87, proline 374–alanine 403, leucine 468–leucine 529, proline 627–phenylalanine 651, and glycine 711–alanine 799. Residues glutamate 61–threonine 71 are compositionally biased toward acidic residues. Basic and acidic residues-rich tracts occupy residues glutamate 72–threonine 81 and proline 374–proline 384. Residues lysine 372–lysine 390 carry the Bipartite nuclear localization signal motif. A DRBM 1 domain is found at glutamate 399–leucine 468. Residues glutamate 474–glutamate 483 show a composition bias toward acidic residues. A compositionally biased stretch (polar residues) spans glutamine 489 to glutamine 513. A DRBM 2 domain is found at histidine 521 to proline 587. Positions arginine 637–phenylalanine 651 are enriched in gly residues. Pro residues predominate over residues proline 717 to proline 747. The span at tyrosine 749 to glycine 782 shows a compositional bias: low complexity.

In terms of assembly, a component of a ybx2/frgy2-containing mRNA-ribonucleoprotein (mRNP) complex. Also a component of the CCAAT box transcription factor (CBTF) complex. In terms of processing, phosphorylated. Phosphorylation affects nuclear translocation. Methylated by protein arginine N-methyltransferase 1 (prmt1b) in the RGG-rich domain. Methylation decreases DNA-binding and thereby decreases transcription of the gata2 gene, but does not regulate dsRNA binding or subcellular localization.

Its subcellular location is the nucleus. The protein localises to the cytoplasm. RNA-binding protein that plays an essential role in the biogenesis of circular RNAs (circRNAs) which are produced by back-splicing circularization of pre-mRNAs. Within the nucleus, promotes circRNAs processing by stabilizing the regulatory elements residing in the flanking introns of the circularized exons. Plays thereby a role in the back-splicing of a subset of circRNAs. As a consequence, participates in a wide range of transcriptional and post-transcriptional processes. Binds to poly-U elements and AU-rich elements (AREs) in the 3'-UTR of target mRNAs. Upon viral infection, ILF3 accumulates in the cytoplasm and participates in the innate antiviral response. Mechanistically, ILF3 becomes phosphorylated and activated by the double-stranded RNA-activated protein kinase/PKR which releases ILF3 from cellular mature circRNAs. In turn, unbound ILF3 molecules are able to interact with and thus inhibit viral mRNAs. Has a cytoplasmic role early in development as part of a ribonucleoprotein (mRNP) complex which may regulate mRNA transport and/or translation. Following nuclear localization at the mid-blastula transition, acts as a transcription factor and binds the 5'-CCAAT-3' promoter sequence to regulate transcription of the gata2 gene as a subunit of the CCAAT box transcription factor (CBTF). Its role as an mRNP component negatively regulates its activity as a transcription factor by precluding its nuclear localization. The chain is Interleukin enhancer-binding factor 3-B (ilf3-b) from Xenopus laevis (African clawed frog).